The following is a 213-amino-acid chain: MNLLIMGLPGAGKGTQAAKIVETFELIHISTGDMFRAAMANQTEMGVLAKSYIDKGDLVPDEVTNGIVKERLAQADIKEKGFLLDGYPRTIEQAHALDETLKALGLTLDGVINIEVDPASLIDRLSGRIINKKTGETFHKIFNPPVGDYKEEDFYQREDDKPETVKRRLDVNIAQGEPIIKHYRQAGIVRDIDGNKDISEVFADIKKVIENLK.

Residue 10–15 participates in ATP binding; it reads GAGKGT. Residues 30-59 are NMP; the sequence is STGDMFRAAMANQTEMGVLAKSYIDKGDLV. AMP contacts are provided by residues Thr-31, Arg-36, 57–59, 86–89, and Gln-93; these read DLV and GYPR. The tract at residues 127-160 is LID; it reads GRIINKKTGETFHKIFNPPVGDYKEEDFYQREDD. ATP is bound by residues Arg-128 and 137–138; that span reads TF. AMP is bound by residues Arg-157 and Arg-168. ATP is bound at residue Lys-196.

The protein belongs to the adenylate kinase family. Monomer.

It is found in the cytoplasm. It catalyses the reaction AMP + ATP = 2 ADP. Its pathway is purine metabolism; AMP biosynthesis via salvage pathway; AMP from ADP: step 1/1. Its function is as follows. Catalyzes the reversible transfer of the terminal phosphate group between ATP and AMP. Plays an important role in cellular energy homeostasis and in adenine nucleotide metabolism. The polypeptide is Adenylate kinase (Streptococcus equi subsp. equi (strain 4047)).